The following is a 216-amino-acid chain: Protein Nef (216 aa).

Residues 1 to 32 (MGGKWSKHSVPGWSTVRERMRRAEPATDRVRQ) form a disordered region. G2 carries N-myristoyl glycine; by host lipidation. The residue at position 6 (S6) is a Phosphoserine; by host. A compositionally biased stretch (basic and acidic residues) spans 16–32 (VRERMRRAEPATDRVRQ). The segment at 72-75 (EDEE) is acidic; interacts with host PACS1 and PACS2; stabilizes the interaction of NEF/MHC-I with host AP1M1; necessary for MHC-I internalization. An SH3-binding; interaction with Src family tyrosine kinases region spans residues 79 to 88 (PVRPQVPLRP). Residues 82-85 (PQVP) carry the PxxP; stabilizes the interaction of NEF/MHC-I with host AP1M1; necessary for MHC-I internalization motif. A mediates dimerization, Nef-PTE1 interaction region spans residues 118–134 (DILDLWIYHTQGYFPDW). The tract at residues 158–190 (VDPEKVEEANEGENNCLLHPMSQHGMDDPEKEV) is binding to ATP6V1H. Positions 174–175 (LL) match the Dileucine internalization motif; necessary for CD4 internalization motif. A Diacidic; necessary for CD4 internalization motif is present at residues 184–185 (DD).

It belongs to the lentivirus primate group Nef protein family. In terms of assembly, monomer; cytosolic form. Homodimer; membrane bound form. Interacts with Nef associated p21-activated kinase (PAK2); this interaction activates PAK2. Associates with the Nef-MHC-I-AP1 complex; this complex is required for MHC-I internalization. Interacts (via C-terminus) with host PI3-kinase. Interacts with host PACS1; this interaction seems to be weak. Interacts with host PACS2. Interacts with host LCK and MAPK3; these interactions inhibit the kinase activity of the latter. Interacts with host ATP6V1H; this interaction may play a role in CD4 endocytosis. Associates with the CD4-Nef-AP2 complex; this complex is required for CD4 internalization. Interacts with host AP2 subunit alpha and AP2 subunit sigma2. Interacts with TCR-zeta chain; this interaction up-regulates the Fas ligand (FasL) surface expression. Interacts with host HCK, LYN, and SRC; these interactions activate the Src family kinases. Interacts with MAP3K5; this interaction inhibits the Fas and TNFR-mediated death signals. Interacts with beta-COP and PTE1. Interacts with human RACK1; this increases Nef phosphorylation by PKC. Interacts with TP53; this interaction decreases the half-life of TP53, protecting the infected cell against p53-mediated apoptosis. The virion-associated Nef proteins are cleaved by the viral protease to release the soluble C-terminal core protein. Nef is probably cleaved concomitantly with viral structural proteins on maturation of virus particles. Post-translationally, myristoylated. In terms of processing, phosphorylated on serine residues, probably by host PKCdelta and theta.

The protein localises to the host cell membrane. It is found in the virion. The protein resides in the secreted. Its subcellular location is the host Golgi apparatus membrane. Its function is as follows. Factor of infectivity and pathogenicity, required for optimal virus replication. Alters numerous pathways of T-lymphocyte function and down-regulates immunity surface molecules in order to evade host defense and increase viral infectivity. Alters the functionality of other immunity cells, like dendritic cells, monocytes/macrophages and NK cells. Functionally, in infected CD4(+) T-lymphocytes, down-regulates the surface MHC-I, mature MHC-II, CD4, CD28, CCR5 and CXCR4 molecules. Mediates internalization and degradation of host CD4 through the interaction of with the cytoplasmic tail of CD4, the recruitment of AP-2 (clathrin adapter protein complex 2), internalization through clathrin coated pits, and subsequent transport to endosomes and lysosomes for degradation. Diverts host MHC-I molecules to the trans-Golgi network-associated endosomal compartments by an endocytic pathway to finally target them for degradation. MHC-I down-regulation may involve AP-1 (clathrin adapter protein complex 1) or possibly Src family kinase-ZAP70/Syk-PI3K cascade recruited by PACS2. In consequence infected cells are masked for immune recognition by cytotoxic T-lymphocytes. Decreasing the number of immune receptors also prevents reinfection by more HIV particles (superinfection). Down-regulates host SERINC3 and SERINC5 thereby excluding these proteins from the viral particles. Virion infectivity is drastically higher when SERINC3 or SERINC5 are excluded from the viral envelope, because these host antiviral proteins impair the membrane fusion event necessary for subsequent virion penetration. In terms of biological role, bypasses host T-cell signaling by inducing a transcriptional program nearly identical to that of anti-CD3 cell activation. Interaction with TCR-zeta chain up-regulates the Fas ligand (FasL). Increasing surface FasL molecules and decreasing surface MHC-I molecules on infected CD4(+) cells send attacking cytotoxic CD8+ T-lymphocytes into apoptosis. Plays a role in optimizing the host cell environment for viral replication without causing cell death by apoptosis. Protects the infected cells from apoptosis in order to keep them alive until the next virus generation is ready to strike. Inhibits the Fas and TNFR-mediated death signals by blocking MAP3K5/ASK1. Decreases the half-life of TP53, protecting the infected cell against p53-mediated apoptosis. Inhibits the apoptotic signals regulated by the Bcl-2 family proteins through the formation of a Nef/PI3-kinase/PAK2 complex that leads to activation of PAK2 and induces phosphorylation of host BAD. Its function is as follows. Extracellular Nef protein targets CD4(+) T-lymphocytes for apoptosis by interacting with CXCR4 surface receptors. The sequence is that of Protein Nef from Homo sapiens (Human).